The sequence spans 454 residues: Dihydrolipoyllysine-residue succinyltransferase component of 2-oxoglutarate dehydrogenase complex, mitochondrial (454 aa).

The transit peptide at 1–68 (MLSRSRCVSR…RFFQTTAVCK (68 aa)) directs the protein to the mitochondrion. The Lipoyl-binding domain maps to 71–145 (VITVQTPAFA…EGGTPLFTLR (75 aa)). Position 82 is a phosphoserine (Ser82). Lys111 carries the N6-lipoyllysine modification. The disordered stretch occupies residues 147 to 227 (TGAAPAKAKP…KGLRSEHREK (81 aa)). Positions 149-163 (AAPAKAKPAETPAPA) are enriched in low complexity. Lys155 carries the post-translational modification N6-acetyllysine. Residues 186–197 (PPVPSPSQPPSS) show a composition bias toward pro residues. A compositionally biased stretch (low complexity) spans 198–217 (KPVSAIKPTAAPPLAEAGAA). N6-acetyllysine occurs at positions 268, 273, 274, 278, and 308. Active-site residues include His425 and Asp429.

This sequence belongs to the 2-oxoacid dehydrogenase family. In terms of assembly, the 2-oxoglutarate dehydrogenase complex is composed of OGDH (2-oxoglutarate dehydrogenase; E1), DLST (dihydrolipoamide succinyltransferase; E2), DLD (dihydrolipoamide dehydrogenase; E3) and the assembly factor KGD4. It contains multiple copies of the three enzymatic components (E1, E2 and E3). In the nucleus, the 2-oxoglutarate dehydrogenase complex associates with KAT2A. Interacts with ABHD11; this interaction maintains the functional lipoylation of the 2-oxoglutarate dehydrogenase complex. The cofactor is (R)-lipoate.

The protein resides in the mitochondrion matrix. The protein localises to the nucleus. It catalyses the reaction N(6)-[(R)-dihydrolipoyl]-L-lysyl-[protein] + succinyl-CoA = N(6)-[(R)-S(8)-succinyldihydrolipoyl]-L-lysyl-[protein] + CoA. It functions in the pathway amino-acid degradation; L-lysine degradation via saccharopine pathway; glutaryl-CoA from L-lysine: step 6/6. The protein operates within carbohydrate metabolism; tricarboxylic acid cycle. Dihydrolipoamide succinyltransferase (E2) component of the 2-oxoglutarate dehydrogenase complex. The 2-oxoglutarate dehydrogenase complex catalyzes the overall conversion of 2-oxoglutarate to succinyl-CoA and CO(2). The 2-oxoglutarate dehydrogenase complex is mainly active in the mitochondrion. A fraction of the 2-oxoglutarate dehydrogenase complex also localizes in the nucleus and is required for lysine succinylation of histones: associates with KAT2A on chromatin and provides succinyl-CoA to histone succinyltransferase KAT2A. This Mus musculus (Mouse) protein is Dihydrolipoyllysine-residue succinyltransferase component of 2-oxoglutarate dehydrogenase complex, mitochondrial.